A 191-amino-acid chain; its full sequence is Transcription factor E (191 aa).

Residues 4-87 form the HTH TFE/IIEalpha-type domain; the sequence is RNKELLEIGR…YWHIETKRLP (84 aa). The disordered stretch occupies residues 170–191; that stretch reads APPKKEKKGKKSKKRSKKSKKK. Basic residues predominate over residues 174–191; it reads KEKKGKKSKKRSKKSKKK.

This sequence belongs to the TFE family. In terms of assembly, monomer. Interaction with RNA polymerase subunits RpoF and RpoE is necessary for Tfe stimulatory transcription activity. Able to interact with Tbp and RNA polymerase in the absence of DNA promoter. Interacts both with the preinitiation and elongation complexes.

Transcription factor that plays a role in the activation of archaeal genes transcribed by RNA polymerase. Facilitates transcription initiation by enhancing TATA-box recognition by TATA-box-binding protein (Tbp), and transcription factor B (Tfb) and RNA polymerase recruitment. Not absolutely required for transcription in vitro, but particularly important in cases where Tbp or Tfb function is not optimal. It dynamically alters the nucleic acid-binding properties of RNA polymerases by stabilizing the initiation complex and destabilizing elongation complexes. Seems to translocate with the RNA polymerase following initiation and acts by binding to the non template strand of the transcription bubble in elongation complexes. The polypeptide is Transcription factor E (Pyrococcus horikoshii (strain ATCC 700860 / DSM 12428 / JCM 9974 / NBRC 100139 / OT-3)).